We begin with the raw amino-acid sequence, 357 residues long: UDP-3-O-acylglucosamine N-acyltransferase (357 aa).

The Proton acceptor role is filled by His-258.

The protein belongs to the transferase hexapeptide repeat family. LpxD subfamily. Homotrimer.

It carries out the reaction a UDP-3-O-[(3R)-3-hydroxyacyl]-alpha-D-glucosamine + a (3R)-hydroxyacyl-[ACP] = a UDP-2-N,3-O-bis[(3R)-3-hydroxyacyl]-alpha-D-glucosamine + holo-[ACP] + H(+). The protein operates within bacterial outer membrane biogenesis; LPS lipid A biosynthesis. Its function is as follows. Catalyzes the N-acylation of UDP-3-O-acylglucosamine using 3-hydroxyacyl-ACP as the acyl donor. Is involved in the biosynthesis of lipid A, a phosphorylated glycolipid that anchors the lipopolysaccharide to the outer membrane of the cell. The protein is UDP-3-O-acylglucosamine N-acyltransferase of Azorhizobium caulinodans (strain ATCC 43989 / DSM 5975 / JCM 20966 / LMG 6465 / NBRC 14845 / NCIMB 13405 / ORS 571).